A 134-amino-acid polypeptide reads, in one-letter code: MIGRLNHVAIAVPDLEAAAAQYRNTLGAEVGAPQDEPDHGVTVIFITLPNTKIELLHPLGEGSPIAGFLEKNPAGGIHHICYEVEDILAARDRLKEAGARVLGSGEPKIGAHGKPVLFLHPKDFNGCLVELEQV.

The VOC domain maps to arginine 4–valine 134. 3 residues coordinate Co(2+): histidine 7, histidine 79, and glutamate 130. Glutamate 130 serves as the catalytic Proton donor/acceptor.

This sequence belongs to the methylmalonyl-CoA epimerase family. Requires Co(2+) as cofactor. Mn(2+) serves as cofactor.

The enzyme catalyses (2R)-ethylmalonyl-CoA = (2S)-ethylmalonyl-CoA. The catalysed reaction is (R)-methylmalonyl-CoA = (S)-methylmalonyl-CoA. Its function is as follows. Promiscuous isomerase that catalyzes epimerization of both ethylmalonyl-CoA and methylmalonyl-CoA. Has thus a dual role in the ethylmalonyl-CoA pathway for acetyl-CoA assimilation required for R.sphaeroides growth on acetate as sole carbon source. This Cereibacter sphaeroides (strain ATCC 17023 / DSM 158 / JCM 6121 / CCUG 31486 / LMG 2827 / NBRC 12203 / NCIMB 8253 / ATH 2.4.1.) (Rhodobacter sphaeroides) protein is Ethylmalonyl-CoA/methylmalonyl-CoA epimerase.